The primary structure comprises 1014 residues: Beta-galactosidase (1014 aa).

The active-site Proton donor is Glu460. Catalysis depends on Glu527, which acts as the Nucleophile.

The protein belongs to the glycosyl hydrolase 2 family.

The enzyme catalyses Hydrolysis of terminal non-reducing beta-D-galactose residues in beta-D-galactosides.. The sequence is that of Beta-galactosidase (lacZ) from Halalkalibacterium halodurans (strain ATCC BAA-125 / DSM 18197 / FERM 7344 / JCM 9153 / C-125) (Bacillus halodurans).